We begin with the raw amino-acid sequence, 357 residues long: Holliday junction branch migration complex subunit RuvB (357 aa).

The tract at residues 4-195 (TDKLAAKAVS…FGIVARLEFY (192 aa)) is large ATPase domain (RuvB-L). ATP is bound by residues L34, R35, G76, K79, T80, T81, 142-144 (EDY), R185, Y195, and R232. T80 contributes to the Mg(2+) binding site. Residues 196 to 266 (TPAELAKIVT…VADAALAMLD (71 aa)) are small ATPAse domain (RuvB-S). The segment at 269–357 (AVGFDLMDRK…PVRDLWDDNQ (89 aa)) is head domain (RuvB-H). DNA-binding residues include R305, R324, and R329.

Belongs to the RuvB family. As to quaternary structure, homohexamer. Forms an RuvA(8)-RuvB(12)-Holliday junction (HJ) complex. HJ DNA is sandwiched between 2 RuvA tetramers; dsDNA enters through RuvA and exits via RuvB. An RuvB hexamer assembles on each DNA strand where it exits the tetramer. Each RuvB hexamer is contacted by two RuvA subunits (via domain III) on 2 adjacent RuvB subunits; this complex drives branch migration. In the full resolvosome a probable DNA-RuvA(4)-RuvB(12)-RuvC(2) complex forms which resolves the HJ.

The protein resides in the cytoplasm. It carries out the reaction ATP + H2O = ADP + phosphate + H(+). The RuvA-RuvB-RuvC complex processes Holliday junction (HJ) DNA during genetic recombination and DNA repair, while the RuvA-RuvB complex plays an important role in the rescue of blocked DNA replication forks via replication fork reversal (RFR). RuvA specifically binds to HJ cruciform DNA, conferring on it an open structure. The RuvB hexamer acts as an ATP-dependent pump, pulling dsDNA into and through the RuvAB complex. RuvB forms 2 homohexamers on either side of HJ DNA bound by 1 or 2 RuvA tetramers; 4 subunits per hexamer contact DNA at a time. Coordinated motions by a converter formed by DNA-disengaged RuvB subunits stimulates ATP hydrolysis and nucleotide exchange. Immobilization of the converter enables RuvB to convert the ATP-contained energy into a lever motion, pulling 2 nucleotides of DNA out of the RuvA tetramer per ATP hydrolyzed, thus driving DNA branch migration. The RuvB motors rotate together with the DNA substrate, which together with the progressing nucleotide cycle form the mechanistic basis for DNA recombination by continuous HJ branch migration. Branch migration allows RuvC to scan DNA until it finds its consensus sequence, where it cleaves and resolves cruciform DNA. In Ralstonia pickettii (strain 12J), this protein is Holliday junction branch migration complex subunit RuvB.